The following is a 416-amino-acid chain: D-amino acid dehydrogenase (416 aa).

FAD is bound at residue 3 to 17 (VIVLGAGIIGVTSAY).

It belongs to the DadA oxidoreductase family. FAD is required as a cofactor.

It carries out the reaction a D-alpha-amino acid + A + H2O = a 2-oxocarboxylate + AH2 + NH4(+). The protein operates within amino-acid degradation; D-alanine degradation; NH(3) and pyruvate from D-alanine: step 1/1. Functionally, oxidative deamination of D-amino acids. This chain is D-amino acid dehydrogenase, found in Sinorhizobium medicae (strain WSM419) (Ensifer medicae).